Here is a 211-residue protein sequence, read N- to C-terminus: ATP-dependent Clp protease proteolytic subunit (211 aa).

Residue serine 106 is the Nucleophile of the active site. Histidine 131 is an active-site residue.

This sequence belongs to the peptidase S14 family. In terms of assembly, fourteen ClpP subunits assemble into 2 heptameric rings which stack back to back to give a disk-like structure with a central cavity, resembling the structure of eukaryotic proteasomes.

The protein localises to the cytoplasm. It catalyses the reaction Hydrolysis of proteins to small peptides in the presence of ATP and magnesium. alpha-casein is the usual test substrate. In the absence of ATP, only oligopeptides shorter than five residues are hydrolyzed (such as succinyl-Leu-Tyr-|-NHMec, and Leu-Tyr-Leu-|-Tyr-Trp, in which cleavage of the -Tyr-|-Leu- and -Tyr-|-Trp bonds also occurs).. Its function is as follows. Cleaves peptides in various proteins in a process that requires ATP hydrolysis. Has a chymotrypsin-like activity. Plays a major role in the degradation of misfolded proteins. The chain is ATP-dependent Clp protease proteolytic subunit from Maricaulis maris (strain MCS10) (Caulobacter maris).